Reading from the N-terminus, the 481-residue chain is UDP-glycosyltransferase 88F3 (481 aa).

Residues Ser-288, 357–358 (WA), 375–383 (HCGWNSVLE), and 397–400 (YAEQ) contribute to the UDP-alpha-D-glucose site.

Belongs to the UDP-glycosyltransferase family.

Functionally, glycosyltransferase that may possess chalcone and dihydrochalcone 2'-O-glucosyltransferase activity. The sequence is that of UDP-glycosyltransferase 88F3 from Pyrus communis (Pear).